A 247-amino-acid chain; its full sequence is Fumarate reductase iron-sulfur subunit (247 aa).

Residue Tyr12 participates in a menaquinone binding. In terms of domain architecture, 2Fe-2S ferredoxin-type spans 14-94; that stretch reads PEIESAPTFQ…PGPVRVEPMR (81 aa). Cys56, Cys61, and Cys76 together coordinate [2Fe-2S] cluster. The 4Fe-4S ferredoxin-type domain occupies 140-169; the sequence is LDAFKQFSMCINCMLCYSACPVYALDPDFL. [4Fe-4S] cluster is bound by residues Cys149, Cys152, and Cys155. Residues Cys159, Cys205, and Cys211 each coordinate [3Fe-4S] cluster. Cys215 is a [4Fe-4S] cluster binding site. A menaquinone is bound at residue 226-229; that stretch reads QRYK.

This sequence belongs to the succinate dehydrogenase/fumarate reductase iron-sulfur protein family. Fumarate dehydrogenase forms part of an enzyme complex containing four subunits: a flavoprotein, an iron-sulfur, and two hydrophobic anchor proteins. [2Fe-2S] cluster is required as a cofactor. Requires [3Fe-4S] cluster as cofactor. The cofactor is [4Fe-4S] cluster.

It is found in the cell membrane. The enzyme catalyses a quinone + succinate = fumarate + a quinol. It catalyses the reaction a menaquinone + succinate = a menaquinol + fumarate. This Mycobacterium tuberculosis (strain CDC 1551 / Oshkosh) protein is Fumarate reductase iron-sulfur subunit (frdB).